The primary structure comprises 2591 residues: Eukaryotic translation initiation factor 2-alpha kinase PK4 (2591 aa).

Topologically, residues 1-16 (MYNKGINICLNEDNKC) are cytoplasmic. The helical transmembrane segment at 17–37 (IILLHIIFNKCIVSFVASHIL) threads the bilayer. The Lumenal portion of the chain corresponds to 38–1488 (VEGKICFLNR…EFSSQKHKKS (1451 aa)). The disordered stretch occupies residues 1028-1048 (KKKRNSKKGENRNKKRKTQKR). A helical membrane pass occupies residues 1489 to 1509 (WYWNIFYAITLVIVIPFIFIY). The Cytoplasmic segment spans residues 1510–2591 (RLFKKQTNNK…NIINGNEVDH (1082 aa)). The interval 1781-1840 (NLNSADEENKSPYAKKYSDEKKNRSKSSKYIENTQSNNNDNTNGNMNVGNHINNDKMNNK) is disordered. Positions 1813–1832 (NTQSNNNDNTNGNMNVGNHI) are enriched in low complexity. Residues 1880–1888 (IGQGGFGSV) and Lys-1905 each bind ATP. Disordered stretches follow at residues 2123 to 2157 (DNDE…GGDI) and 2183 to 2212 (IKNT…TNNN). Residues 2134–2143 (KKNDNDERKS) are compositionally biased toward basic and acidic residues. In terms of domain architecture, Protein kinase spans 2181–2532 (MTIKNTQGTS…KIKVLLDPHL (352 aa)). Residue Asp-2369 is the Proton acceptor of the active site. Residue Thr-2436 is modified to Phosphothreonine; by autocatalysis. The span at 2558-2574 (STNPNGDIKENVNQNNL) shows a compositional bias: polar residues. Positions 2558–2591 (STNPNGDIKENVNQNNLVDDKGNNNIINGNEVDH) are disordered. Low complexity predominate over residues 2580–2591 (NNNIINGNEVDH).

This sequence belongs to the protein kinase superfamily. Ser/Thr protein kinase family. GCN2 subfamily. As to quaternary structure, may form oligomers in response to stress; oligomerization may result in catalytic activity. Interacts with BIP; the interaction is disrupted in response to stress.

Its subcellular location is the endoplasmic reticulum membrane. It catalyses the reaction L-seryl-[protein] + ATP = O-phospho-L-seryl-[protein] + ADP + H(+). It carries out the reaction L-threonyl-[protein] + ATP = O-phospho-L-threonyl-[protein] + ADP + H(+). Dissociation from BIP and oligomerization, may results autophosphorylation and kinase activity induction. Its function is as follows. During the asexual blood stage, phosphorylates translation factor eIF2alpha in late schizonts resulting in protein translation inhibition. Plays a role in trophozoite differentiation into schizonts. This Plasmodium berghei (strain Anka) protein is Eukaryotic translation initiation factor 2-alpha kinase PK4.